Reading from the N-terminus, the 457-residue chain is 4-hydroxybenzoate transporter PcaK (457 aa).

Over 1-34 (MPKEANMASQDYATQRSSLDAQALINDAPLSRYQ) the chain is Cytoplasmic. Residues 35–55 (WLIAIVCFLIVFVDGIDTAAM) form a helical membrane-spanning segment. Topologically, residues 56–72 (GFIAPALAQDWGVDRSQ) are periplasmic. A helical transmembrane segment spans residues 73-93 (LGPVMSAALGGMIIGALVSGP). The Cytoplasmic segment spans residues 94–101 (TADRFGRK). The chain crosses the membrane as a helical span at residues 102 to 122 (IVLSMSMLVFGGFTLACAYST). The Periplasmic portion of the chain corresponds to 123–128 (NLDSLV). A helical membrane pass occupies residues 129-149 (IFRFLTGIGLGAAMPNATTLF). The Cytoplasmic portion of the chain corresponds to 150–168 (SEYCPARIRSLLVTCMFCG). Residues 169–189 (YNLGMAIGGFISSWLIPAFGW) traverse the membrane as a helical segment. The Periplasmic portion of the chain corresponds to 190 to 191 (HS). Residues 192–212 (LFLLGGWAPLILMLLVIFFLP) traverse the membrane as a helical segment. Over 213 to 274 (ESYRFLIVKG…LFSAKYVKGT (62 aa)) the chain is Cytoplasmic. Residues 275 to 295 (VLLWVTYFMGLVMIYLLTSWL) traverse the membrane as a helical segment. The Periplasmic segment spans residues 296–310 (PTLMRETGASLERAA). The chain crosses the membrane as a helical span at residues 311–331 (FLGGLFQFGGVLSALFIGWAM). At 332–338 (DRFNPNR) the chain is on the cytoplasmic side. A helical membrane pass occupies residues 339–359 (IIAGFYLAAGIFAVIVGQSLS). The Periplasmic portion of the chain corresponds to 360 to 363 (NPTL). A helical transmembrane segment spans residues 364–384 (LALFILCAGIAVNGAQSSMPV). Residues 385–400 (LSARFYPTQCRATGVA) are Cytoplasmic-facing. A helical membrane pass occupies residues 401–421 (WMSGIGRFGAVFGAWIGAVLL). Over 422–426 (GNNWS) the chain is Periplasmic. A helical membrane pass occupies residues 427–447 (FTMILSMLIIPAAAAAIAIFV). Over 448–457 (KSLVAHTDAT) the chain is Cytoplasmic.

It belongs to the major facilitator superfamily. Aromatic acid:H(+) symporter (AAHS) (TC 2.A.1.15) family. In terms of assembly, homotrimer.

The protein localises to the cell inner membrane. In terms of biological role, uptake of 4-hydroxybenzoate (4-HB). Can also transport a variety of aromatic acids with hydroxyl substitutions at the 2-, 3- and 4-positions, such as salicylate, 2,4-dihydroxybenzoate, protocatechuate, 3-hydroxybenzoate, vanillate and gentisate. The chain is 4-hydroxybenzoate transporter PcaK from Acinetobacter baylyi (strain ATCC 33305 / BD413 / ADP1).